We begin with the raw amino-acid sequence, 196 residues long: uncharacterized protein (196 aa).

Positions 51–164 (VAEHSLLVEE…DRIFGKPDPV (114 aa)) constitute an HD domain.

This is an uncharacterized protein from Rhodobacter capsulatus (strain ATCC BAA-309 / NBRC 16581 / SB1003).